The primary structure comprises 480 residues: Glutamate--tRNA ligase (480 aa).

The 'HIGH' region signature appears at 21-31 (PSPTGYLHVGG). Residues C110, C112, C137, and H139 each coordinate Zn(2+). A 'KMSKS' region motif is present at residues 248–252 (KLSKR). K251 lines the ATP pocket.

The protein belongs to the class-I aminoacyl-tRNA synthetase family. Glutamate--tRNA ligase type 1 subfamily. As to quaternary structure, monomer. Zn(2+) serves as cofactor.

The protein resides in the cytoplasm. The catalysed reaction is tRNA(Glu) + L-glutamate + ATP = L-glutamyl-tRNA(Glu) + AMP + diphosphate. Catalyzes the attachment of glutamate to tRNA(Glu) in a two-step reaction: glutamate is first activated by ATP to form Glu-AMP and then transferred to the acceptor end of tRNA(Glu). This chain is Glutamate--tRNA ligase, found in Haemophilus influenzae (strain 86-028NP).